The primary structure comprises 403 residues: Protein WVD2-like 6 (403 aa).

2 disordered regions span residues 1 to 179 and 254 to 403; these read MDSE…ALPN and LKKI…AVEP. A compositionally biased stretch (polar residues) spans 25–56; sequence GDSSNGNGGTSENLECCSTQHPMEASEGTQNE. Residues 103–118 are compositionally biased toward low complexity; sequence SVAPNVKPVKSPKSKS. At Ser-113 the chain carries Phosphoserine. Basic and acidic residues-rich tracts occupy residues 120–132, 139–153, and 162–171; these read NGREAHVTKHGNH, GTRDKPKLRETRKQV, and QYPKEDDGKP. A compositionally biased stretch (basic residues) spans 263-273; that stretch reads KSPKLGRKKTN. Residues 336-348 are compositionally biased toward low complexity; it reads KVAPAKAVTASTK. Basic and acidic residues predominate over residues 385–394; it reads VNEDRNESHM.

This sequence belongs to the TPX2 family. As to expression, expressed in seedlings.

Its subcellular location is the cytoplasm. The protein resides in the cytoskeleton. Its function is as follows. Microtubule-associated protein (MAP) that regulates the orientation of interphase cortical microtubules. The sequence is that of Protein WVD2-like 6 from Arabidopsis thaliana (Mouse-ear cress).